The sequence spans 289 residues: Homoserine kinase (289 aa).

An ATP-binding site is contributed by 79-89 (PLARGLGSSSS).

Belongs to the GHMP kinase family. Homoserine kinase subfamily.

It is found in the cytoplasm. The enzyme catalyses L-homoserine + ATP = O-phospho-L-homoserine + ADP + H(+). It participates in amino-acid biosynthesis; L-threonine biosynthesis; L-threonine from L-aspartate: step 4/5. Functionally, catalyzes the ATP-dependent phosphorylation of L-homoserine to L-homoserine phosphate. The polypeptide is Homoserine kinase (Streptococcus pneumoniae (strain Taiwan19F-14)).